The sequence spans 307 residues: Serine/threonine-protein phosphatase 4 catalytic subunit B (307 aa).

Mn(2+)-binding residues include aspartate 54, histidine 56, aspartate 82, and asparagine 114. Catalysis depends on histidine 115, which acts as the Proton donor. Residues histidine 164 and histidine 238 each contribute to the Mn(2+) site. A Leucine methyl ester modification is found at leucine 307.

This sequence belongs to the PPP phosphatase family. PP-4 (PP-X) subfamily. Serine/threonine-protein phosphatase 4 (PP4) occurs in different assemblies of the catalytic and one or more regulatory subunits. The cofactor is Mn(2+).

It localises to the cytoplasm. Its subcellular location is the cytoskeleton. The protein resides in the microtubule organizing center. It is found in the centrosome. It catalyses the reaction O-phospho-L-seryl-[protein] + H2O = L-seryl-[protein] + phosphate. The catalysed reaction is O-phospho-L-threonyl-[protein] + H2O = L-threonyl-[protein] + phosphate. Protein phosphatase that regulates many processes such as microtubule organization at centrosomes. This is Serine/threonine-protein phosphatase 4 catalytic subunit B (ppp4cb) from Danio rerio (Zebrafish).